Consider the following 55-residue polypeptide: MITRKHIIKEIHLTTIMMICMRQLRMEELFTRHSMFSSIFNYSKTLDGLFSIHSP.

This is an uncharacterized protein from Tibrogargan virus (strain CS132) (TIBV).